Consider the following 225-residue polypeptide: Ribosomal RNA large subunit methyltransferase E (225 aa).

S-adenosyl-L-methionine contacts are provided by Gly64, Trp66, Asp93, Asp109, and Asp138. The active-site Proton acceptor is the Lys178.

Belongs to the class I-like SAM-binding methyltransferase superfamily. RNA methyltransferase RlmE family.

It is found in the cytoplasm. The catalysed reaction is uridine(2552) in 23S rRNA + S-adenosyl-L-methionine = 2'-O-methyluridine(2552) in 23S rRNA + S-adenosyl-L-homocysteine + H(+). Its function is as follows. Specifically methylates the uridine in position 2552 of 23S rRNA at the 2'-O position of the ribose in the fully assembled 50S ribosomal subunit. This chain is Ribosomal RNA large subunit methyltransferase E, found in Cupriavidus pinatubonensis (strain JMP 134 / LMG 1197) (Cupriavidus necator (strain JMP 134)).